Here is a 127-residue protein sequence, read N- to C-terminus: Vacuolar ATPase assembly integral membrane protein VMA21 (127 aa).

The interval 1-28 is disordered; that stretch reads MATRRNPTKESITTSPPPDQQPRQPGEL. Over 1-45 the chain is Cytoplasmic; that stretch reads MATRRNPTKESITTSPPPDQQPRQPGELEHREAIQLRDLPGYPQQ. Residues 46-66 traverse the membrane as a helical segment; it reads VLWKLIIYSIAVLVLPLSAYF. Residues 67–79 are Lumenal-facing; the sequence is YSVNYVFDGNTTY. The helical transmembrane segment at 80-100 threads the bilayer; sequence AGATAAITANLILFSYIVVAM. Residues 101 to 127 are Cytoplasmic-facing; that stretch reads REDKGDQEQLREQQQLRGNKEETKKMK. A disordered region spans residues 107–127; the sequence is QEQLREQQQLRGNKEETKKMK. Residues 118-127 show a composition bias toward basic and acidic residues; it reads GNKEETKKMK. A Prevents secretion from ER motif is present at residues 124–127; sequence KKMK.

Belongs to the VMA21 family.

It localises to the endoplasmic reticulum membrane. The protein localises to the endoplasmic reticulum-Golgi intermediate compartment membrane. It is found in the cytoplasmic vesicle. Its subcellular location is the COPII-coated vesicle membrane. In terms of biological role, required for the assembly of the V0 complex of the vacuolar ATPase (V-ATPase) in the endoplasmic reticulum. The protein is Vacuolar ATPase assembly integral membrane protein VMA21 of Coccidioides immitis (strain RS) (Valley fever fungus).